Consider the following 146-residue polypeptide: Large ribosomal subunit protein uL15 (146 aa).

The segment at 1–51 (MQLNTIKPAEGSKKNRRHVGRGIGSGLGKTAGRGHKGQKSRSGGFHKVGFE) is disordered. The segment covering 21–31 (RGIGSGLGKTA) has biased composition (gly residues).

It belongs to the universal ribosomal protein uL15 family. In terms of assembly, part of the 50S ribosomal subunit.

Binds to the 23S rRNA. In Polynucleobacter necessarius subsp. necessarius (strain STIR1), this protein is Large ribosomal subunit protein uL15.